Consider the following 253-residue polypeptide: Small ribosomal subunit protein uS2 (253 aa).

This sequence belongs to the universal ribosomal protein uS2 family.

The protein is Small ribosomal subunit protein uS2 of Hahella chejuensis (strain KCTC 2396).